The sequence spans 783 residues: MRWQCGTRFRGLRPVVAPWTALLALGLPGWVLAVSATAAAVVPEQHASTAGQHPLDWLLTDRGPFHRAQEYADFMERYRQGFTTRYRIYREFARWKVNNLALERKDFFSLPLPLAPESIRNIRLLGRRPNLQQVTENLIKKYGTHFLLSATLGGEESLTIFVDKRKLGRKTETTGGASIIGGSGNSTAVSLETLHQLAASYFIDRESTLRRLHHIQIATGAIKVTETRTGPLGCSNYDNLDSVSSVLVQSPENKVQLLGLQVLLPEYLRERFVAAALSYITCSSEGELVCKENDCWCKCSPTFPDCNCPDADIQAMEDSLLQIQDSWATHNRQFEESEEFQALLKRLPDDRFLNSTAISQFWAMDTSLQHRYQQLGAGLKVLFKKTHRIVRRLFNLCKRCHRQPRFRLPKERSLSYWWNRIQSLLYCGESTFPGTFLEQSHSCTCPYDQSSCQGPIPCALGEGPACAHCAPDNSTRCGSCNPGYVLAQGLCRPEVAESLENFLGLETDLQDLELKYLLQKQDSRIEVHSIFISNDMRLGSWFDPSWRKRMLLTLKSNKYKPGLVHVMLALSLQICLTKNSTLEPVMAIYVNPFGGSHSESWFMPVNEGSFPDWERTNVDAAAQCQNWTITLGNRWKTFFETVHVYLRSRIKSLDDSSNETIYYEPLEMTDPSKNLGYMKINTLQVFGYSLPFDPDAIRDLILQLDYPYTQGSQDSALLQLIELRDRVNQLSPPGKVRLDLFSCLLRHRLKLANNEVGRIQSSLRAFNSKLPNPVEYETGKLCS.

Positions methionine 1–alanine 33 are cleaved as a signal peptide. The region spanning arginine 85 to threonine 281 is the MACPF domain. 6 N-linked (GlcNAc...) asparagine glycosylation sites follow: asparagine 185, asparagine 354, asparagine 473, asparagine 579, asparagine 626, and asparagine 658.

Belongs to the BRINP family.

The protein resides in the secreted. Functionally, inhibits neuronal cell proliferation by negative regulation of the cell cycle transition. This chain is BMP/retinoic acid-inducible neural-specific protein 2 (BRINP2), found in Pongo abelii (Sumatran orangutan).